The chain runs to 368 residues: CST complex subunit STN1 (368 aa).

Residues 2-192 form an interaction with CTC1 region; that stretch reads AVSLGDDDAD…KCYDQPFKMP (191 aa). Positions 58 to 162 form a DNA-binding region, OB; sequence VDVLGIVVYK…EIKATSFYKV (105 aa). Winged helix-turn-helix (wHTH) stretches follow at residues 201–295 and 296–368; these read AGGS…NVTE and QDKD…YIVL.

It belongs to the CTC1 family. Component of the CST complex.

It localises to the nucleus. The protein resides in the chromosome. Its subcellular location is the telomere. In terms of biological role, component of the CST complex proposed to act as a specialized replication factor promoting DNA replication under conditions of replication stress or natural replication barriers such as the telomere duplex. The CST complex binds single-stranded DNA with high affinity in a sequence-independent manner, while isolated subunits bind DNA with low affinity by themselves. Initially the CST complex has been proposed to protect telomeres from DNA degradation. However, the CST complex has been shown to be involved in several aspects of telomere replication. This is CST complex subunit STN1 from Danio rerio (Zebrafish).